The primary structure comprises 280 residues: Probable endonuclease 4 (280 aa).

Residues His69, His109, Glu145, Asp179, His182, His216, Asp229, His231, and Glu261 each coordinate Zn(2+).

This sequence belongs to the AP endonuclease 2 family. Requires Zn(2+) as cofactor.

It catalyses the reaction Endonucleolytic cleavage to 5'-phosphooligonucleotide end-products.. Its function is as follows. Endonuclease IV plays a role in DNA repair. It cleaves phosphodiester bonds at apurinic or apyrimidinic (AP) sites, generating a 3'-hydroxyl group and a 5'-terminal sugar phosphate. This chain is Probable endonuclease 4, found in Erwinia tasmaniensis (strain DSM 17950 / CFBP 7177 / CIP 109463 / NCPPB 4357 / Et1/99).